The sequence spans 461 residues: tRNA(Ile)-lysidine synthase (461 aa).

ATP is bound at residue 26 to 31; the sequence is SGGPDS.

This sequence belongs to the tRNA(Ile)-lysidine synthase family.

Its subcellular location is the cytoplasm. The catalysed reaction is cytidine(34) in tRNA(Ile2) + L-lysine + ATP = lysidine(34) in tRNA(Ile2) + AMP + diphosphate + H(+). Its function is as follows. Ligates lysine onto the cytidine present at position 34 of the AUA codon-specific tRNA(Ile) that contains the anticodon CAU, in an ATP-dependent manner. Cytidine is converted to lysidine, thus changing the amino acid specificity of the tRNA from methionine to isoleucine. This is tRNA(Ile)-lysidine synthase from Clostridium acetobutylicum (strain ATCC 824 / DSM 792 / JCM 1419 / IAM 19013 / LMG 5710 / NBRC 13948 / NRRL B-527 / VKM B-1787 / 2291 / W).